A 247-amino-acid chain; its full sequence is E3 ubiquitin-protein ligase RNF182 (247 aa).

Residues 20–68 (CKICYNRYNLKQRKPKVLECCHRVCAKCLYKIIDFGDSPQGVIVCPFCR) form an RING-type zinc finger. The next 2 helical transmembrane spans lie at 184 to 204 (VLVW…IYLL) and 211 to 231 (LGVV…VYGF).

Interacts with ATP6V0C.

It is found in the membrane. Its subcellular location is the cytoplasm. The catalysed reaction is S-ubiquitinyl-[E2 ubiquitin-conjugating enzyme]-L-cysteine + [acceptor protein]-L-lysine = [E2 ubiquitin-conjugating enzyme]-L-cysteine + N(6)-ubiquitinyl-[acceptor protein]-L-lysine.. Its pathway is protein modification; protein ubiquitination. In terms of biological role, E3 ubiquitin-protein ligase that mediates the ubiquitination of ATP6V0C and targets it to degradation via the ubiquitin-proteasome pathway. Also plays a role in the inhibition of TLR-triggered innate immune response by mediating 'Lys'-48-linked ubiquitination and subsequent degradation of NF-kappa-B component RELA. This Rattus norvegicus (Rat) protein is E3 ubiquitin-protein ligase RNF182 (Rnf182).